The following is a 590-amino-acid chain: Negative elongation factor D (590 aa).

The segment at Phe-15–Val-43 is disordered. Acidic residues predominate over residues Trp-21 to Val-43.

This sequence belongs to the NELF-D family. The NELF complex is composed of NELFA, NELFB, NELFCD and NELFE; NELFA and NELFCD form a stable subcomplex that binds primarily through NELFCD to the N-terminus of NELFB. Binds RNA which may help to stabilize the NELF complex on nucleic acid. In vitro, the NELFA:NELFCD subcomplex binds to ssDNA and ssRNA in a sequence- and structure-dependent manner. Interacts with ARAF1. Interacts with PCF11. Interacts with NELFB. Interacts with KAT8.

It localises to the nucleus. Essential component of the NELF complex, a complex that negatively regulates the elongation of transcription by RNA polymerase II. The NELF complex, which acts via an association with the DSIF complex and causes transcriptional pausing, is counteracted by the P-TEFb kinase complex. This is Negative elongation factor D (NELFCD) from Sus scrofa (Pig).